The sequence spans 366 residues: tRNA/tmRNA (uracil-C(5))-methyltransferase (366 aa).

5 residues coordinate S-adenosyl-L-methionine: Gln190, Tyr218, Asn223, Glu239, and Asp299. The Nucleophile role is filled by Cys324. Glu358 serves as the catalytic Proton acceptor.

Belongs to the class I-like SAM-binding methyltransferase superfamily. RNA M5U methyltransferase family. TrmA subfamily.

It catalyses the reaction uridine(54) in tRNA + S-adenosyl-L-methionine = 5-methyluridine(54) in tRNA + S-adenosyl-L-homocysteine + H(+). It carries out the reaction uridine(341) in tmRNA + S-adenosyl-L-methionine = 5-methyluridine(341) in tmRNA + S-adenosyl-L-homocysteine + H(+). Functionally, dual-specificity methyltransferase that catalyzes the formation of 5-methyluridine at position 54 (m5U54) in all tRNAs, and that of position 341 (m5U341) in tmRNA (transfer-mRNA). The sequence is that of tRNA/tmRNA (uracil-C(5))-methyltransferase from Cronobacter sakazakii (strain ATCC BAA-894) (Enterobacter sakazakii).